A 365-amino-acid chain; its full sequence is Flagellar P-ring protein (365 aa).

A signal peptide spans 1–19 (MIKFLSALILLLVTTAAQA).

This sequence belongs to the FlgI family. The basal body constitutes a major portion of the flagellar organelle and consists of four rings (L,P,S, and M) mounted on a central rod.

It localises to the periplasm. It is found in the bacterial flagellum basal body. Its function is as follows. Assembles around the rod to form the L-ring and probably protects the motor/basal body from shearing forces during rotation. This Shigella boydii serotype 4 (strain Sb227) protein is Flagellar P-ring protein.